The primary structure comprises 154 residues: Pro-corazonin (154 aa).

The N-terminal stretch at 1–19 (MLRLLLLPLFLFTLSMCMG) is a signal peptide. Q20 is modified (pyrrolidone carboxylic acid). N30 is subject to Asparagine amide. Residues 70 to 154 (LERCLSQLQR…SAEPNVFGKH (85 aa)) constitute a propeptide that is removed on maturation.

This sequence belongs to the corazonin family. Expression is restricted to 24 neurons in the larval CNS (8 in the brain and 16 in the ventral nerve cord) and 12-16 neurons in the pars lateralis of the adult brain.

Its subcellular location is the secreted. In terms of biological role, cardioactive peptide. Corazonin is probably involved in the physiological regulation of the heart beat. Clock (Clk) and cycle (cyc) proteins negatively regulate Crz transcription in a cell-specific manner. This Drosophila erecta (Fruit fly) protein is Pro-corazonin (Crz).